Here is a 430-residue protein sequence, read N- to C-terminus: Adenylosuccinate synthetase (430 aa).

GTP-binding positions include 12–18 and 40–42; these read GDEGKGK and GHT. The Proton acceptor role is filled by Asp13. Positions 13 and 40 each coordinate Mg(2+). IMP-binding positions include 13-16, 38-41, Thr129, Arg143, Gln224, Thr239, and Arg303; these read DEGK and NAGH. The active-site Proton donor is the His41. 299–305 lines the substrate pocket; that stretch reads TVSNRER. GTP contacts are provided by residues Arg305, 331-333, and 413-415; these read KLD and STG.

Belongs to the adenylosuccinate synthetase family. Homodimer. It depends on Mg(2+) as a cofactor.

It is found in the cytoplasm. It carries out the reaction IMP + L-aspartate + GTP = N(6)-(1,2-dicarboxyethyl)-AMP + GDP + phosphate + 2 H(+). Its pathway is purine metabolism; AMP biosynthesis via de novo pathway; AMP from IMP: step 1/2. Its function is as follows. Plays an important role in the de novo pathway of purine nucleotide biosynthesis. Catalyzes the first committed step in the biosynthesis of AMP from IMP. The polypeptide is Adenylosuccinate synthetase (Ehrlichia ruminantium (strain Gardel)).